The sequence spans 172 residues: NADH dehydrogenase [ubiquinone] 1 alpha subcomplex subunit 8 (172 aa).

2 consecutive CHCH domains span residues 33 to 74 and 75 to 118; these read GAQC…FRQI and KRHC…LGWV. Short sequence motifs (cx9C motif) lie at residues 36 to 46, 56 to 66, 78 to 88, and 100 to 110; these read CDKPNKEFMLC, CLEEGKLVNKC, CAEPFTEYWTC, and CRKQQAKFDEC. Cystine bridges form between Cys-36/Cys-66, Cys-46/Cys-56, Cys-78/Cys-110, and Cys-88/Cys-100. Residues 133 to 164 form a disordered region; the sequence is TDRPLPENPYHSRPRPDPSPEIEGDLQPATHG.

It belongs to the complex I NDUFA8 subunit family. As to quaternary structure, complex I is composed of 45 different subunits. May contain intrachain disulfide bonds, as evidenced by its electrophoretic mobility under reducing vs non-reducing conditions.

The protein localises to the mitochondrion inner membrane. It localises to the mitochondrion intermembrane space. The protein resides in the mitochondrion. In terms of biological role, accessory subunit of the mitochondrial membrane respiratory chain NADH dehydrogenase (Complex I), that is believed not to be involved in catalysis. Complex I functions in the transfer of electrons from NADH to the respiratory chain. The immediate electron acceptor for the enzyme is believed to be ubiquinone. The sequence is that of NADH dehydrogenase [ubiquinone] 1 alpha subcomplex subunit 8 (NDUFA8) from Homo sapiens (Human).